A 317-amino-acid chain; its full sequence is Melanocyte-stimulating hormone receptor (317 aa).

Residues 1–37 (MPMQGAQRRLLGSLNSTPTATPNLGLAANHTGAPCLE) are Extracellular-facing. Asn-29 carries an N-linked (GlcNAc...) asparagine glycan. The helical transmembrane segment at 38-63 (VSIPHGLFLSLGLVSLVENVLVVAAI) threads the bilayer. The Cytoplasmic segment spans residues 64–72 (AKNRNLHSP). A helical transmembrane segment spans residues 73-93 (MYCFICCLALSDLLVSGSNML). At 94-118 (ETAVILLLEAGALATRASVVQQLQN) the chain is on the extracellular side. Residues 119 to 140 (TIDVLTCSSMLCSLCFLGAIAV) traverse the membrane as a helical segment. Over 141–163 (DRYVSIFYALRYHSIVTLPRARR) the chain is Cytoplasmic. A helical membrane pass occupies residues 164-183 (AIAAIWVASVLSSTLFIAYC). The Extracellular segment spans residues 184–191 (DHAAVLLC). A helical membrane pass occupies residues 192–211 (LVVFFLAMLVLMAVLYVHML). Topologically, residues 212-240 (ARACQHAQGITRLHKRQLPAHQGFGLRGA) are cytoplasmic. Residues 241 to 266 (ATLTILLGIFFLCWGPFFLHLMLVVL) form a helical membrane-spanning segment. Topologically, residues 267 to 279 (CPQHLTCSCIFKN) are extracellular. The chain crosses the membrane as a helical span at residues 280–300 (FKVFLTLIICNTIIDPLIYAF). Topologically, residues 301–317 (RSQELCRTLKEVLLCSW) are cytoplasmic. Cys-315 is lipidated: S-palmitoyl cysteine.

The protein belongs to the G-protein coupled receptor 1 family. Interacts with MGRN1, but does not undergo MGRN1-mediated ubiquitination; this interaction competes with GNAS-binding and thus inhibits agonist-induced cAMP production. Interacts with OPN3; the interaction results in a decrease in MC1R-mediated cAMP signaling and ultimately a decrease in melanin production in melanocytes.

The protein localises to the cell membrane. Functionally, receptor for MSH (alpha, beta and gamma) and ACTH. The activity of this receptor is mediated by G proteins which activate adenylate cyclase. Mediates melanogenesis, the production of eumelanin (black/brown) and phaeomelanin (red/yellow), via regulation of cAMP signaling in melanocytes. In Alouatta caraya (Black howler monkey), this protein is Melanocyte-stimulating hormone receptor (MC1R).